The primary structure comprises 179 residues: Large ribosomal subunit protein uL6 (179 aa).

The protein belongs to the universal ribosomal protein uL6 family. In terms of assembly, part of the 50S ribosomal subunit.

This protein binds to the 23S rRNA, and is important in its secondary structure. It is located near the subunit interface in the base of the L7/L12 stalk, and near the tRNA binding site of the peptidyltransferase center. This chain is Large ribosomal subunit protein uL6, found in Mycobacterium avium (strain 104).